Here is a 217-residue protein sequence, read N- to C-terminus: Deoxyribose-phosphate aldolase (217 aa).

The active-site Proton donor/acceptor is the Asp-90. Lys-152 (schiff-base intermediate with acetaldehyde) is an active-site residue. The Proton donor/acceptor role is filled by Lys-181.

Belongs to the DeoC/FbaB aldolase family. DeoC type 1 subfamily.

The protein resides in the cytoplasm. It carries out the reaction 2-deoxy-D-ribose 5-phosphate = D-glyceraldehyde 3-phosphate + acetaldehyde. The protein operates within carbohydrate degradation; 2-deoxy-D-ribose 1-phosphate degradation; D-glyceraldehyde 3-phosphate and acetaldehyde from 2-deoxy-alpha-D-ribose 1-phosphate: step 2/2. Functionally, catalyzes a reversible aldol reaction between acetaldehyde and D-glyceraldehyde 3-phosphate to generate 2-deoxy-D-ribose 5-phosphate. The sequence is that of Deoxyribose-phosphate aldolase from Metamycoplasma hominis (Mycoplasma hominis).